The primary structure comprises 722 residues: Zinc finger protein 219 (722 aa).

The interval 1–21 (MEGSRPRAPSGHLAPSPPAFD) is disordered. Phosphoserine is present on Ser16. 2 consecutive C2H2-type zinc fingers follow at residues 57-79 (FPCP…LRAH) and 85-107 (FQCP…LRTH). The segment at 137–160 (ARSSGGMQATPATEGLARPQAPSS) is disordered. 2 C2H2-type zinc fingers span residues 163-186 (FRCP…HILH) and 189-212 (WKCG…LTAH). The segment at 215–275 (PERPLAATSA…EEPPAPPEFR (61 aa)) is disordered. Pro residues-rich tracts occupy residues 225–247 (APPP…PQPE) and 259–272 (TPAP…PAPP). 2 consecutive C2H2-type zinc fingers follow at residues 274–296 (FRCQ…MRKH) and 302–324 (HACP…MKVH). Residues 384–495 (LRAGEGRPNG…GTRPEGGRGA (112 aa)) are disordered. Residues 390–404 (RPNGEGAEPGPGRSF) are compositionally biased toward gly residues. The span at 425-438 (EPEEEEEVVEAEEE) shows a compositional bias: acidic residues. Residues 463 to 477 (SASAAGAQARSTATQ) are compositionally biased toward low complexity. 2 consecutive C2H2-type zinc fingers follow at residues 498-520 (KDCP…LRVH) and 526-548 (YKCP…LQRH). 2 disordered regions span residues 542–648 (KYHL…LHRC) and 668–722 (HHSR…GQER). A compositionally biased stretch (pro residues) spans 558–568 (PGPPPEPPPPS). The segment covering 634–643 (GPGGEAGPGG) has biased composition (gly residues). The C2H2-type 9 zinc-finger motif lies at 646-668 (HRCLFCPFATGAPELMALHLQVH). Residues 668–677 (HHSRRARGRR) show a composition bias toward basic residues. Residue Ser692 is modified to Phosphoserine. At Thr695 the chain carries Phosphothreonine. Residue Ser698 is modified to Phosphoserine.

This sequence belongs to the krueppel C2H2-type zinc-finger protein family. As to quaternary structure, interacts with SOX9 (via C-terminus). In terms of tissue distribution, ubiquitous.

Its subcellular location is the nucleus. Transcriptional regulator. Recognizes and binds 2 copies of the core DNA sequence motif 5'-GGGGG-3'. Binds to the HMGN1 promoter and may repress HMGN1 expression. Regulates SNCA expression in primary cortical neurons. Binds to the COL2A1 promoter and activates COL2A1 expression, as part of a complex with SOX9. Plays a role in chondrocyte differentiation. The sequence is that of Zinc finger protein 219 (ZNF219) from Homo sapiens (Human).